We begin with the raw amino-acid sequence, 302 residues long: NAD kinase 2 (302 aa).

Residue Asp78 is the Proton acceptor of the active site. Residues 78–79 (DG), 152–153 (NE), Asp182, and 193–198 (TAYSLS) each bind NAD(+).

This sequence belongs to the NAD kinase family. It depends on a divalent metal cation as a cofactor.

It localises to the cytoplasm. The enzyme catalyses NAD(+) + ATP = ADP + NADP(+) + H(+). Involved in the regulation of the intracellular balance of NAD and NADP, and is a key enzyme in the biosynthesis of NADP. Catalyzes specifically the phosphorylation on 2'-hydroxyl of the adenosine moiety of NAD to yield NADP. The polypeptide is NAD kinase 2 (Prochlorococcus marinus (strain NATL2A)).